Here is a 64-residue protein sequence, read N- to C-terminus: Large ribosomal subunit protein uL29 (64 aa).

This sequence belongs to the universal ribosomal protein uL29 family.

This is Large ribosomal subunit protein uL29 from Acaryochloris marina (strain MBIC 11017).